A 225-amino-acid chain; its full sequence is MOB-like protein phocein (225 aa).

Positions 92, 97, 110, 113, 119, 127, 169, and 174 each coordinate Zn(2+).

Belongs to the MOB1/phocein family. Binds STRN4. Interacts with DNM1 and EPS15. Interacts with nucleoside diphosphate kinase. Interacts with CTTNBP2. Interacts with CTTNBP2NL. Part of the core of STRIPAK complexes composed of PP2A catalytic and scaffolding subunits, the striatins (PP2A regulatory subunits), the striatin-associated proteins MOB4, STRIP1 and STRIP2, PDCD10 and members of the STE20 kinases, such as STK24 and STK26. In terms of processing, phosphorylated on serine residues. Highly expressed in adrenal gland, spinal cord, brain and cerebellum. Detected at lower levels in heart and skeletal muscle, and at very low levels in spleen, liver and intestine.

It is found in the cytoplasm. The protein resides in the membrane. The protein localises to the golgi apparatus. It localises to the golgi stack membrane. Part of the striatin-interacting phosphatase and kinase (STRIPAK) complexes. STRIPAK complexes have critical roles in protein (de)phosphorylation and are regulators of multiple signaling pathways including Hippo, MAPK, nuclear receptor and cytoskeleton remodeling. Different types of STRIPAK complexes are involved in a variety of biological processes such as cell growth, differentiation, apoptosis, metabolism and immune regulation. The protein is MOB-like protein phocein (Mob4) of Rattus norvegicus (Rat).